The primary structure comprises 303 residues: Acetyl-coenzyme A carboxylase carboxyl transferase subunit beta (303 aa).

Residues 25-294 (LWIKCPETGE…NDVSAKSLNG (270 aa)) form the CoA carboxyltransferase N-terminal domain.

The protein belongs to the AccD/PCCB family. As to quaternary structure, acetyl-CoA carboxylase is a heterohexamer composed of biotin carboxyl carrier protein (AccB), biotin carboxylase (AccC) and two subunits each of ACCase subunit alpha (AccA) and ACCase subunit beta (AccD).

Its subcellular location is the cytoplasm. It catalyses the reaction N(6)-carboxybiotinyl-L-lysyl-[protein] + acetyl-CoA = N(6)-biotinyl-L-lysyl-[protein] + malonyl-CoA. Its pathway is lipid metabolism; malonyl-CoA biosynthesis; malonyl-CoA from acetyl-CoA: step 1/1. Functionally, component of the acetyl coenzyme A carboxylase (ACC) complex. Biotin carboxylase (BC) catalyzes the carboxylation of biotin on its carrier protein (BCCP) and then the CO(2) group is transferred by the transcarboxylase to acetyl-CoA to form malonyl-CoA. This chain is Acetyl-coenzyme A carboxylase carboxyl transferase subunit beta, found in Rhizobium rhizogenes (strain K84 / ATCC BAA-868) (Agrobacterium radiobacter).